The primary structure comprises 239 residues: Ribonuclease PH (239 aa).

Residues arginine 87 and 125 to 127 (GTR) each bind phosphate.

It belongs to the RNase PH family. As to quaternary structure, homohexameric ring arranged as a trimer of dimers.

It catalyses the reaction tRNA(n+1) + phosphate = tRNA(n) + a ribonucleoside 5'-diphosphate. Its function is as follows. Phosphorolytic 3'-5' exoribonuclease that plays an important role in tRNA 3'-end maturation. Removes nucleotide residues following the 3'-CCA terminus of tRNAs; can also add nucleotides to the ends of RNA molecules by using nucleoside diphosphates as substrates, but this may not be physiologically important. Probably plays a role in initiation of 16S rRNA degradation (leading to ribosome degradation) during starvation. This chain is Ribonuclease PH, found in Ectopseudomonas mendocina (strain ymp) (Pseudomonas mendocina).